The chain runs to 842 residues: Follistatin-related protein 4 (842 aa).

Residues 1-22 (MKPGGFWLHLTLLGASLPAALG) form the signal peptide. The Kazal-like domain occupies 81–135 (KTGEPECQCLEACRPSYVPVCGSDGRFYENHCKLHRAACLLGKRITVIHSKDCFL). 3 disulfides stabilise this stretch: cysteine 87–cysteine 119, cysteine 93–cysteine 112, and cysteine 101–cysteine 133. The 36-residue stretch at 174–209 (QKRLLVESLFRDLDADGNGHLSSSELAQHVLKKQDL) folds into the EF-hand domain. 5 residues coordinate Ca(2+): aspartate 187, aspartate 189, asparagine 191, histidine 193, and glutamate 198. Ig-like domains are found at residues 251-338 (PEDR…LQVN) and 341-426 (PVIR…EDIS). 2 disulfides stabilise this stretch: cysteine 270-cysteine 321 and cysteine 362-cysteine 413. Asparagine 318 carries an N-linked (GlcNAc...) asparagine glycan.

The protein resides in the secreted. The polypeptide is Follistatin-related protein 4 (FSTL4) (Homo sapiens (Human)).